Here is a 515-residue protein sequence, read N- to C-terminus: 1-pyrroline-5-carboxylate dehydrogenase (515 aa).

Active-site residues include Glu286 and Cys320.

It belongs to the aldehyde dehydrogenase family. RocA subfamily.

The enzyme catalyses L-glutamate 5-semialdehyde + NAD(+) + H2O = L-glutamate + NADH + 2 H(+). It functions in the pathway amino-acid degradation; L-proline degradation into L-glutamate; L-glutamate from L-proline: step 2/2. The sequence is that of 1-pyrroline-5-carboxylate dehydrogenase from Bacillus cytotoxicus (strain DSM 22905 / CIP 110041 / 391-98 / NVH 391-98).